Reading from the N-terminus, the 272-residue chain is Sulfur carrier protein FdhD (272 aa).

The Cysteine persulfide intermediate role is filled by Cys-114.

The protein belongs to the FdhD family.

It localises to the cytoplasm. Its function is as follows. Required for formate dehydrogenase (FDH) activity. Acts as a sulfur carrier protein that transfers sulfur from IscS to the molybdenum cofactor prior to its insertion into FDH. This Mycolicibacterium paratuberculosis (strain ATCC BAA-968 / K-10) (Mycobacterium paratuberculosis) protein is Sulfur carrier protein FdhD.